We begin with the raw amino-acid sequence, 177 residues long: Peptide methionine sulfoxide reductase MsrA (177 aa).

C15 is an active-site residue.

Belongs to the MsrA Met sulfoxide reductase family.

It carries out the reaction L-methionyl-[protein] + [thioredoxin]-disulfide + H2O = L-methionyl-(S)-S-oxide-[protein] + [thioredoxin]-dithiol. It catalyses the reaction [thioredoxin]-disulfide + L-methionine + H2O = L-methionine (S)-S-oxide + [thioredoxin]-dithiol. In terms of biological role, has an important function as a repair enzyme for proteins that have been inactivated by oxidation. Catalyzes the reversible oxidation-reduction of methionine sulfoxide in proteins to methionine. The polypeptide is Peptide methionine sulfoxide reductase MsrA (Mycobacterium leprae (strain Br4923)).